The following is a 382-amino-acid chain: Proton extrusion protein PxcA (382 aa).

The next 4 membrane-spanning stretches (helical) occupy residues 162–182 (ILLL…TYIV), 257–277 (AIKN…VCLV), 305–325 (IILF…TVLL), and 340–360 (FILL…KYWI).

This sequence belongs to the CemA family.

Its subcellular location is the cell inner membrane. Functionally, required for H(+) efflux immediately after light irradiation to form a rapid H(+) concentration gradient across the thylakoid membranes. Together with PxcL, contributes to transient H(+) uptake following dark to light transition. The chain is Proton extrusion protein PxcA from Parasynechococcus marenigrum (strain WH8102).